The chain runs to 189 residues: uncharacterized protein (189 aa).

This sequence belongs to the OsmC/Ohr family.

This is an uncharacterized protein from Methanocaldococcus jannaschii (strain ATCC 43067 / DSM 2661 / JAL-1 / JCM 10045 / NBRC 100440) (Methanococcus jannaschii).